The sequence spans 243 residues: Pyridoxine 5'-phosphate synthase (243 aa).

Asn-9 lines the 3-amino-2-oxopropyl phosphate pocket. 11-12 (DH) is a 1-deoxy-D-xylulose 5-phosphate binding site. A 3-amino-2-oxopropyl phosphate-binding site is contributed by Arg-20. Catalysis depends on His-45, which acts as the Proton acceptor. Positions 47 and 52 each coordinate 1-deoxy-D-xylulose 5-phosphate. Glu-72 (proton acceptor) is an active-site residue. Thr-102 provides a ligand contact to 1-deoxy-D-xylulose 5-phosphate. Residue His-193 is the Proton donor of the active site. Residues Gly-194 and 215 to 216 (GH) each bind 3-amino-2-oxopropyl phosphate.

This sequence belongs to the PNP synthase family. Homooctamer; tetramer of dimers.

It is found in the cytoplasm. The catalysed reaction is 3-amino-2-oxopropyl phosphate + 1-deoxy-D-xylulose 5-phosphate = pyridoxine 5'-phosphate + phosphate + 2 H2O + H(+). The protein operates within cofactor biosynthesis; pyridoxine 5'-phosphate biosynthesis; pyridoxine 5'-phosphate from D-erythrose 4-phosphate: step 5/5. Catalyzes the complicated ring closure reaction between the two acyclic compounds 1-deoxy-D-xylulose-5-phosphate (DXP) and 3-amino-2-oxopropyl phosphate (1-amino-acetone-3-phosphate or AAP) to form pyridoxine 5'-phosphate (PNP) and inorganic phosphate. The protein is Pyridoxine 5'-phosphate synthase of Photobacterium profundum (strain SS9).